A 162-amino-acid polypeptide reads, in one-letter code: Interleukin-15 (162 aa).

Residues 1–29 form the signal peptide; that stretch reads MRISKPYLRSTSIQCYLCLLLNSHFLAEA. A propeptide spanning residues 30–48 is cleaved from the precursor; it reads GIHVFIFGCISAGLPKTEA. Disulfide bonds link C83-C133 and C90-C136. N108, N119, N127, and N143 each carry an N-linked (GlcNAc...) asparagine glycan.

This sequence belongs to the IL-15/IL-21 family. Expressed in many tissues including heart, spleen, lung, liver, muscle and kidney (at mRNA level). Expressed in many tissues including heart, spleen, lung, liver, muscle and kidney (at protein level).

The protein resides in the secreted. Cytokine that plays a major role in the development of inflammatory and protective immune responses to microbial invaders and parasites by modulating immune cells of both the innate and adaptive immune systems. Stimulates the proliferation of natural killer cells, T-cells and B-cells and promotes the secretion of several cytokines. In monocytes, induces the production of IL8 and monocyte chemotactic protein 1/CCL2, two chemokines that attract neutrophils and monocytes respectively to sites of infection. Unlike most cytokines, which are secreted in soluble form, IL15 is expressed in association with its high affinity IL15RA on the surface of IL15-producing cells and delivers signals to target cells that express IL2RB and IL2RG receptor subunits. Binding to its receptor triggers the phosphorylation of JAK1 and JAK3 and the recruitment and subsequent phosphorylation of signal transducer and activator of transcription-3/STAT3 and STAT5. In mast cells, induces the rapid tyrosine phosphorylation of STAT6 and thereby controls mast cell survival and release of cytokines such as IL4. The sequence is that of Interleukin-15 (IL15) from Oryctolagus cuniculus (Rabbit).